The following is a 121-amino-acid chain: Histone H2B (121 aa).

The disordered stretch occupies residues 1-27 (MAPKKAPAAAEKKVKKAPTTEKKNKKK). Ala-2 is subject to N,N,N-trimethylalanine. Residues Lys-5 and Lys-41 each carry the N6-acetyllysine modification. Lys-115 is covalently cross-linked (Glycyl lysine isopeptide (Lys-Gly) (interchain with G-Cter in ubiquitin)).

Belongs to the histone H2B family. In terms of assembly, the nucleosome is a histone octamer containing two molecules each of H2A, H2B, H3 and H4 assembled in one H3-H4 heterotetramer and two H2A-H2B heterodimers. The octamer wraps approximately 147 bp of DNA. Monoubiquitination of Lys-115 gives a specific tag for epigenetic transcriptional activation and is also prerequisite for histone H3 'Lys-4' and 'Lys-79' methylation. Post-translationally, acetylation occurs almost exclusively in the MAC.

The protein localises to the nucleus. The protein resides in the chromosome. Its function is as follows. Core component of nucleosome. Nucleosomes wrap and compact DNA into chromatin, limiting DNA accessibility to the cellular machineries which require DNA as a template. Histones thereby play a central role in transcription regulation, DNA repair, DNA replication and chromosomal stability. DNA accessibility is regulated via a complex set of post-translational modifications of histones, also called histone code, and nucleosome remodeling. The polypeptide is Histone H2B (Tetrahymena pyriformis).